The chain runs to 322 residues: Sideroflexin-1 (322 aa).

Serine 2 is modified (N-acetylserine). At 2–102 (SGELPPNINI…MSAQVPMNMT (101 aa)) the chain is on the mitochondrial matrix side. The chain crosses the membrane as a helical span at residues 103–120 (ITGCMMTFYRTTPAVLFW). The Mitochondrial intermembrane segment spans residues 121 to 146 (QWVNQSFNAVVNYTNRSGDAPLTVNE). The helical transmembrane segment at 147–167 (LGTAYVSATTGAVATALGLNA) threads the bilayer. Over 168–174 (LTKRVSP) the chain is Mitochondrial matrix. Residues 175–195 (LVGRFVPFAAVAAANCINIPL) form a helical membrane-spanning segment. The Mitochondrial intermembrane portion of the chain corresponds to 196–228 (MRQRELKVGIPVTDENGNRLGESASAAKQAITQ). A helical membrane pass occupies residues 229–249 (VVVSRILMAAPGMAIPPFIMN). Over 250–266 (TLEKKAFLKRFPWMSAP) the chain is Mitochondrial matrix. Residues 267 to 287 (VQVGIVGFCLVFATPLCCALF) form a helical membrane-spanning segment. Topologically, residues 288-322 (PQKSSMSVTSLEAELQARIRETYPELRRVYFNKGL) are mitochondrial intermembrane.

The protein belongs to the sideroflexin family.

The protein localises to the mitochondrion inner membrane. The enzyme catalyses L-serine(in) = L-serine(out). It carries out the reaction L-alanine(in) = L-alanine(out). It catalyses the reaction L-cysteine(in) = L-cysteine(out). Amino acid transporter importing serine, an essential substrate of the mitochondrial branch of the one-carbon pathway, into mitochondria. Mitochondrial serine is then converted to glycine and formate, which exits to the cytosol where it is used to generate the charged folates that serve as one-carbon donors. May also transport other amino acids including alanine and cysteine. The chain is Sideroflexin-1 (SFXN1) from Ovis aries (Sheep).